A 115-amino-acid polypeptide reads, in one-letter code: Iron-sulfur cluster insertion protein ErpA (115 aa).

Iron-sulfur cluster is bound by residues Cys43, Cys107, and Cys109.

It belongs to the HesB/IscA family. Homodimer. Iron-sulfur cluster is required as a cofactor.

In terms of biological role, required for insertion of 4Fe-4S clusters for at least IspG. This chain is Iron-sulfur cluster insertion protein ErpA, found in Buchnera aphidicola subsp. Baizongia pistaciae (strain Bp).